A 342-amino-acid polypeptide reads, in one-letter code: Antihemorrhagic factor cHLP-B (342 aa).

The N-terminal stretch at 1–19 is a signal peptide; sequence MNSLVALVLLGQMIGSTLS. 2 consecutive Cystatin fetuin-A-type domains span residues 20 to 129 and 140 to 253; these read HHLQ…AKCH and RNCP…SDCV. Disulfide bonds link cysteine 28–cysteine 333, cysteine 85–cysteine 96, cysteine 110–cysteine 128, cysteine 142–cysteine 145, cysteine 204–cysteine 216, and cysteine 229–cysteine 252. An N-linked (GlcNAc...) asparagine glycan is attached at asparagine 95. An N-linked (GlcNAc...) asparagine glycan is attached at asparagine 203. 2 N-linked (GlcNAc...) asparagine glycosylation sites follow: asparagine 281 and asparagine 292.

Belongs to the fetuin family. Homodimer. In terms of tissue distribution, expressed by the liver.

The protein localises to the secreted. Functionally, potent inhibitor of hemorrhagic activity but also proteolytic activities. Inhibition occurs by formation of a non-covalent complex between this protein and the proteinases at their metalloproteinase domains. The protein is Antihemorrhagic factor cHLP-B of Gloydius brevicauda (Korean slamosa snake).